Here is a 347-residue protein sequence, read N- to C-terminus: Dihydroorotate dehydrogenase (quinone) (347 aa).

FMN is bound by residues 65-69 (AGLDK) and T89. Residue K69 coordinates substrate. 114–118 (NRMGF) provides a ligand contact to substrate. Positions 146 and 179 each coordinate FMN. N179 lines the substrate pocket. Catalysis depends on S182, which acts as the Nucleophile. N184 contacts substrate. FMN-binding residues include K224 and T252. A substrate-binding site is contributed by 253–254 (NT). FMN is bound by residues G275, G304, and 325–326 (YT).

This sequence belongs to the dihydroorotate dehydrogenase family. Type 2 subfamily. Monomer. FMN serves as cofactor.

It localises to the cell membrane. The enzyme catalyses (S)-dihydroorotate + a quinone = orotate + a quinol. Its pathway is pyrimidine metabolism; UMP biosynthesis via de novo pathway; orotate from (S)-dihydroorotate (quinone route): step 1/1. In terms of biological role, catalyzes the conversion of dihydroorotate to orotate with quinone as electron acceptor. The polypeptide is Dihydroorotate dehydrogenase (quinone) (Herminiimonas arsenicoxydans).